The following is a 719-amino-acid chain: Disintegrin and metalloproteinase domain-containing protein 18 (719 aa).

Positions 1–19 are cleaved as a signal peptide; the sequence is MPLLFILAELAMLFARLDS. The propeptide occupies 20–179; that stretch reads EGICLHITVP…QDKNHSQLLP (160 aa). N-linked (GlcNAc...) asparagine glycosylation is found at Asn-61, Asn-75, Asn-121, Asn-152, Asn-173, Asn-244, and Asn-331. The Extracellular portion of the chain corresponds to 173–683; sequence NHSQLLPQSL…TKRLSKNEDS (511 aa). A Peptidase M12B domain is found at 180–378; it reads QSLKLHIIVG…FDTQCLGDLS (199 aa). Disulfide bonds link Cys-289-Cys-373, Cys-332-Cys-357, and Cys-334-Cys-339. Residues Asn-356 and Asn-405 are each glycosylated (N-linked (GlcNAc...) asparagine). A Disintegrin domain is found at 387–476; it reads QAVCGNGIME…HCVPDTFALN (90 aa). Cys-447 and Cys-468 are joined by a disulfide. Residues Asn-607, Asn-614, and Asn-621 are each glycosylated (N-linked (GlcNAc...) asparagine). The region spanning 616–650 is the EGF-like domain; the sequence is TGNDCNATKKCKGNGICNNFGNCQCFPDYRPPDCN. 3 disulfide bridges follow: Cys-620–Cys-632, Cys-626–Cys-638, and Cys-640–Cys-649. The helical transmembrane segment at 684-704 threads the bilayer; that stretch reads WVILGFFIFLPFIVTFLVGIM. Residues 705-719 lie on the Cytoplasmic side of the membrane; sequence KRNERKIVPQGEHKI.

Post-translationally, the prodomain and the metalloprotease-like domain are cleaved during the epididymal maturation of the spermatozoa. In terms of tissue distribution, expressed specifically in testis.

Its subcellular location is the membrane. Sperm surface membrane protein that may be involved in spermatogenesis and fertilization. This is a non catalytic metalloprotease-like protein. The sequence is that of Disintegrin and metalloproteinase domain-containing protein 18 (Adam18) from Mus musculus (Mouse).